A 289-amino-acid polypeptide reads, in one-letter code: ATP synthase gamma chain (289 aa).

The protein belongs to the ATPase gamma chain family. F-type ATPases have 2 components, CF(1) - the catalytic core - and CF(0) - the membrane proton channel. CF(1) has five subunits: alpha(3), beta(3), gamma(1), delta(1), epsilon(1). CF(0) has three main subunits: a, b and c.

The protein resides in the cell inner membrane. Produces ATP from ADP in the presence of a proton gradient across the membrane. The gamma chain is believed to be important in regulating ATPase activity and the flow of protons through the CF(0) complex. The chain is ATP synthase gamma chain from Coxiella burnetii (strain CbuK_Q154) (Coxiella burnetii (strain Q154)).